Consider the following 240-residue polypeptide: Serine protease SplB (240 aa).

Residues 1–36 form the signal peptide; the sequence is MNKNVVIKSLATLTILTSVAGIGTTLVEEVQQTAKA. Active-site charge relay system residues include His-75, Asp-113, and Ser-193.

The protein belongs to the peptidase S1B family.

The protein localises to the secreted. Functionally, serine protease that cleaves specifically after the sequence Trp-Glu-Leu-Gln. In Staphylococcus aureus (strain bovine RF122 / ET3-1), this protein is Serine protease SplB (splB).